A 306-amino-acid chain; its full sequence is Protein YIPF1 (306 aa).

The Cytoplasmic segment spans residues 1–119; it reads MAAVDDLQFE…VRLYIRSNPD (119 aa). A disordered region spans residues 30–63; that stretch reads IEDPSVSFGHQPRPPGSVGREEDEELLGNNDSDE. A compositionally biased stretch (acidic residues) spans 50–63; the sequence is EEDEELLGNNDSDE. A helical membrane pass occupies residues 120-140; the sequence is LYGPFWICATLVFAIAISGNL. Over 141–162 the chain is Lumenal; sequence SNFLIHLGEKTYHYVPEFQKVS. A helical membrane pass occupies residues 163 to 183; the sequence is IAATVIYAYAWLVPLALWGFL. Residues 184-200 lie on the Cytoplasmic side of the membrane; sequence LWRNSKVMSMVSYSFLE. Residues 201 to 221 traverse the membrane as a helical segment; it reads IVCVYGYSLFIYIPTAVLWII. Residues 222 to 227 are Lumenal-facing; that stretch reads PQRVVR. A helical membrane pass occupies residues 228–248; sequence WVLVMIALGVSGSVLVMTFWP. The Cytoplasmic segment spans residues 249–256; the sequence is AVREDNRR. Residues 257–277 form a helical membrane-spanning segment; that stretch reads VALATIVTIVLLHVLLSVGCL. Residues 278–306 lie on the Lumenal side of the membrane; it reads AYFFDAPEMDHLPAAITTPNQTVTAAKSS. N297 is a glycosylation site (N-linked (GlcNAc...) asparagine).

The protein belongs to the YIP1 family. In terms of assembly, interacts with YIPF6; this interaction may stabilize YIPF1. May also form a ternary complex with YIPF2 and YIPF6.

Its subcellular location is the golgi apparatus. It localises to the cis-Golgi network membrane. The protein resides in the trans-Golgi network membrane. It is found in the late endosome membrane. In Mus musculus (Mouse), this protein is Protein YIPF1 (Yipf1).